Consider the following 480-residue polypeptide: Glutamate--tRNA ligase (480 aa).

The short motif at 21–31 is the 'HIGH' region element; the sequence is PSPTGYLHVGG. Residues cysteine 110, cysteine 112, cysteine 137, and histidine 139 each contribute to the Zn(2+) site. Positions 248-252 match the 'KMSKS' region motif; sequence KLSKR. Lysine 251 provides a ligand contact to ATP.

It belongs to the class-I aminoacyl-tRNA synthetase family. Glutamate--tRNA ligase type 1 subfamily. As to quaternary structure, monomer. The cofactor is Zn(2+).

It localises to the cytoplasm. It catalyses the reaction tRNA(Glu) + L-glutamate + ATP = L-glutamyl-tRNA(Glu) + AMP + diphosphate. Its function is as follows. Catalyzes the attachment of glutamate to tRNA(Glu) in a two-step reaction: glutamate is first activated by ATP to form Glu-AMP and then transferred to the acceptor end of tRNA(Glu). In Histophilus somni (strain 129Pt) (Haemophilus somnus), this protein is Glutamate--tRNA ligase.